The primary structure comprises 406 residues: MGDELHNRLLHQNDGTKDAILYKIIESLVCSICHDYMFVPMMTPCGHNYCYGCLNTWFASNTQKELACPQCRSDITTIPALNTTLQQYLSFILEKLRDQNDESFKKLLTTKTKEENDYKNDKEKDTLFDKVFKNSALAVADDSDDGITRCSNCHWELDPDEVEDGNVCPHCNARIRNYAGGRDEFDEEEYSEGELDEIRESMRRRRENRFASTNPFANRDDVSSEDDDSSEEEPMREHIPLGRWARSHNRSIAVDAVDDEDDEEEDEEEEEEMDSDLKDFIEDDEDDEDEDGSRRNLVLSALKNRHVIITDDEEEEQRRHATEEEDRDSDFYEHNDDGFVSGDSLDEDQKEVTRIQSSSDSEDRSLSYSGSSDVKDNNDDNTEELDDPQPKRQKRFRVVLGDSDDE.

Residues 30–72 form an RING-type zinc finger; sequence CSICHDYMFVPMMTPCGHNYCYGCLNTWFASNTQKELACPQCR. Phosphoserine occurs at positions 143 and 191. Residues 209 to 406 form a disordered region; it reads RFASTNPFAN…RVVLGDSDDE (198 aa). 3 stretches are compositionally biased toward acidic residues: residues 223–232, 256–274, and 281–291; these read SSEDDDSSEE, AVDDEDDEEEDEEEEEEMD, and IEDDEDDEDED. The residue at position 310 (T310) is a Phosphothreonine. A Phosphoserine modification is found at S403.

Interacts with POB3 and SPT16.

Its subcellular location is the nucleus. This Saccharomyces cerevisiae (strain ATCC 204508 / S288c) (Baker's yeast) protein is RING finger protein PSH1 (PSH1).